The chain runs to 302 residues: Single-stranded DNA-binding protein (302 aa).

Residues 3 to 7 are LAST; that stretch reads KRKST. Zn(2+)-binding residues include His65, Cys78, Cys88, and Cys91. The segment at 273–302 is disordered; sequence TKTEDDFMSSSSGSSSSADDTDLDDLLNDL. Positions 280-290 are enriched in low complexity; the sequence is MSSSSGSSSSA. Positions 291-302 are enriched in acidic residues; that stretch reads DDTDLDDLLNDL.

The protein belongs to the Tequatrovirus single-stranded DNA-binding protein family. As to quaternary structure, homodimer in the absence of DNA, monomer when binding DNA. Interacts with the DNA helicase assembly protein; a ternary complex between the helicase assembly protein, the single-stranded DNA-binding protein and ssDNA is an obligatory intermediate in the helicase loading mechanism. Part of the replicase complex that includes the DNA polymerase, the polymerase clamp, the clamp loader complex, the single-stranded DNA binding protein, the primase, the DnaB-like SF4 replicative helicase and the helicase assembly factor. Interacts (via C-terminus) with the viral SF1 dDA helicase. Interacts with the viral SF2 UvsW repair helicase.

In terms of biological role, single-stranded DNA-binding protein that participates in viral DNA replication, recombination, and repair. Coats the lagging-strand ssDNA as the replication fork advances. Stimulates the activities of viral DNA polymerase and DnaB-like SF4 replicative helicase, probably via its interaction with the helicase assembly factor. Together with DnaB-like SF4 replicative helicase and the helicase assembly factor, promotes pairing of two homologous DNA molecules containing complementary single-stranded regions and mediates homologous DNA strand exchange. Also promotes the formation of joint molecules. mRNA specific autogenous translational repressor. The chain is Single-stranded DNA-binding protein from Escherichia coli (Bacteriophage T2).